Here is a 230-residue protein sequence, read N- to C-terminus: Carbohydrate deacetylase (230 aa).

Residues histidine 59 and histidine 123 each coordinate Mg(2+).

The protein belongs to the YdjC deacetylase family. In terms of assembly, homodimer. It depends on Mg(2+) as a cofactor.

Probably catalyzes the deacetylation of acetylated carbohydrates an important step in the degradation of oligosaccharides. The protein is Carbohydrate deacetylase of Oceanobacillus iheyensis (strain DSM 14371 / CIP 107618 / JCM 11309 / KCTC 3954 / HTE831).